Consider the following 189-residue polypeptide: HTH-type transcriptional repressor AcnR (189 aa).

Residues 10–70 (AERKVEILSG…EVAHEDMRKM (61 aa)) enclose the HTH tetR-type domain. The segment at residues 33-52 (TVARLEETIGKSRGAIFHHY) is a DNA-binding region (H-T-H motif). Residues 79–80 (LI), Arg130, and Gln134 contribute to the citrate site. Glu181 contacts Mg(2+). Arg185 lines the citrate pocket.

Homodimer.

Functionally, acnR negatively controls the expression of the aconitase gene acn. This chain is HTH-type transcriptional repressor AcnR, found in Corynebacterium jeikeium (strain K411).